We begin with the raw amino-acid sequence, 118 residues long: Large ribosomal subunit protein bL20 (118 aa).

It belongs to the bacterial ribosomal protein bL20 family.

In terms of biological role, binds directly to 23S ribosomal RNA and is necessary for the in vitro assembly process of the 50S ribosomal subunit. It is not involved in the protein synthesizing functions of that subunit. The protein is Large ribosomal subunit protein bL20 of Sulfurovum sp. (strain NBC37-1).